Here is a 483-residue protein sequence, read N- to C-terminus: Glycogen synthase (483 aa).

Residue Lys18 coordinates ADP-alpha-D-glucose.

It belongs to the glycosyltransferase 1 family. Bacterial/plant glycogen synthase subfamily.

It catalyses the reaction [(1-&gt;4)-alpha-D-glucosyl](n) + ADP-alpha-D-glucose = [(1-&gt;4)-alpha-D-glucosyl](n+1) + ADP + H(+). It participates in glycan biosynthesis; glycogen biosynthesis. Synthesizes alpha-1,4-glucan chains using ADP-glucose. The protein is Glycogen synthase of Rhodopseudomonas palustris (strain TIE-1).